We begin with the raw amino-acid sequence, 370 residues long: Chaperone protein DnaJ (370 aa).

Residues 4–68 (DYYQVLGVSK…QKRAAYDRFG (65 aa)) form the J domain. The CR-type zinc-finger motif lies at 133-211 (GIEKNISFSS…CHGMGRYHKQ (79 aa)). Zn(2+)-binding residues include cysteine 146, cysteine 149, cysteine 163, cysteine 166, cysteine 185, cysteine 188, cysteine 199, and cysteine 202. CXXCXGXG motif repeat units lie at residues 146–153 (CDACHGTG), 163–170 (CDSCGGVG), 185–192 (CHKCQGNG), and 199–206 (CKKCHGMG).

This sequence belongs to the DnaJ family. In terms of assembly, homodimer. Requires Zn(2+) as cofactor.

It localises to the cytoplasm. Its function is as follows. Participates actively in the response to hyperosmotic and heat shock by preventing the aggregation of stress-denatured proteins and by disaggregating proteins, also in an autonomous, DnaK-independent fashion. Unfolded proteins bind initially to DnaJ; upon interaction with the DnaJ-bound protein, DnaK hydrolyzes its bound ATP, resulting in the formation of a stable complex. GrpE releases ADP from DnaK; ATP binding to DnaK triggers the release of the substrate protein, thus completing the reaction cycle. Several rounds of ATP-dependent interactions between DnaJ, DnaK and GrpE are required for fully efficient folding. Also involved, together with DnaK and GrpE, in the DNA replication of plasmids through activation of initiation proteins. In Rickettsia typhi (strain ATCC VR-144 / Wilmington), this protein is Chaperone protein DnaJ.